An 872-amino-acid polypeptide reads, in one-letter code: MLTAKETRDSFKNFFESKGHQIVPSAPMVIKDDPTLMFTNAGMNQFKDIILGNHPAKYHRVADSQKCLRVSGKHNDLEEVGHDTYHHTMFEMLGNWSFGDYFKKEAISWAWEYLVDVLKLNPEHLYATVFEGSPEEGLERDNEAASYWEQYLPKDHIINGNKHDNFWEMGDTGPCGPCSEIHIDLRPAEERAKISGRDLVNHDHPQVIEIWNLVFMQYNRKADSTLEPLPAKVIDTGMGFERLCMALQGKTSNYDTDVFQPLIKAIAQMAGTEYGKNEQNDIAMRVIADHIRTIAFSITDGQLPSNAKAGYVIRRILRRAVRYGYTFLGQKQAFMYKLLPVLIDSMGDAYPELIAQKELIEKVIKEEEESFLRTLETGIRLLDKTMADTKANGKTEISGKDAFTLYDTFGFPLDLTELILRENGMTVNVEEFDAEMQQQKQRARNAAAIETGDWIILKEGTTEFVGYDYTEYETSILRYRQVKQKNQTLYQIVLDYTPFYAESGGQVGDTGVLVNEFETIEVIDTKKENNLPIHITKKLPEHPEAPMMACVDTDKRAACAANHSATHLLDEALREVLGEHVEQKGSLVTPDSLRFDFSHFQKVTDEELRKVEHLVNAKIRANVPLQEHRNIPIEEAKELGAIALFGEKYGDHVRVIQFGSSIEFCGGTHVAATGNIGMVKIISESSVAAGVRRIEAYTGARVEEMLDTIQDTLSDLKALFNNAPDLGVAIRKYIDENAGLKKQVEDFMKEKEAAVKERLLKNVQEINGIKVIKFCLPMPAEVVKNIAFQLRGEITENLFFVAGTVDANKPMLTVMISDNLVAGGLKAGNLVKEAAKLIQGGGGGQPHFATAGGKNPDGLNAAVEKVLELAGI.

Zn(2+) contacts are provided by H563, H567, C665, and H669.

This sequence belongs to the class-II aminoacyl-tRNA synthetase family. Zn(2+) is required as a cofactor.

Its subcellular location is the cytoplasm. The catalysed reaction is tRNA(Ala) + L-alanine + ATP = L-alanyl-tRNA(Ala) + AMP + diphosphate. In terms of biological role, catalyzes the attachment of alanine to tRNA(Ala) in a two-step reaction: alanine is first activated by ATP to form Ala-AMP and then transferred to the acceptor end of tRNA(Ala). Also edits incorrectly charged Ser-tRNA(Ala) and Gly-tRNA(Ala) via its editing domain. The protein is Alanine--tRNA ligase of Bacteroides fragilis (strain YCH46).